The chain runs to 512 residues: MTQFITHKWLAALGLASSIAAFPALAAKDVVVAVGSNFTTLDPYDANDTLSQAVAKSFYQGLFGLDKDMKVKNVLAEGYTVSDDGLTYTITLRRGVKFQDGADFNAAAVKANLDRASNPDNHLKRYNLYKNIAKTEVVDPATVKITLKQPFSAFINILAHPATAMISPQALEKYGKDIGFHPVGTGPYQLETWNQTDFVKVKKFAGYWQQGLPKLDSITWRPVTDNNTRAAMLQTGEAQFAFPIPYEQAALLAKNKNLELVASPSIMQRYISMNVTQKPFDNPKVREALNYAINRQALVKVAFAGYATPATGVVPPSIAYAQSYQPWPYDPAKARELLKEAGYPDGFSTTLWSSHNHSTAQKVLQFTQQQLAQIGIKARITAMDAGQRAAEVEGKGQKESGVRMFYTGWSASTGEADWALSPLFASQNWPPTQFNTAFYSNKQVDSDLAAALKTNDPQEKTRLYKEAQDIIWKESPWIPLVVEKLVSAHSKNLTGFWIMPDTGFSFDDADLK.

Residues 1–26 (MTQFITHKWLAALGLASSIAAFPALA) form the signal peptide.

It belongs to the bacterial solute-binding protein 5 family. As to quaternary structure, the complex is composed of two ATP-binding proteins (GsiA), two transmembrane proteins (GsiC and GsiD) and a solute-binding protein (GsiB).

It is found in the periplasm. Its function is as follows. Part of the ABC transporter complex GsiABCD involved in glutathione import. Binds glutathione. The polypeptide is Glutathione-binding protein GsiB (Salmonella choleraesuis (strain SC-B67)).